We begin with the raw amino-acid sequence, 449 residues long: Phosphoglucosamine mutase (449 aa).

Residue Ser-101 is the Phosphoserine intermediate of the active site. Mg(2+)-binding residues include Ser-101, Asp-242, Asp-244, and Asp-246. Position 101 is a phosphoserine (Ser-101).

The protein belongs to the phosphohexose mutase family. Requires Mg(2+) as cofactor. In terms of processing, activated by phosphorylation.

It catalyses the reaction alpha-D-glucosamine 1-phosphate = D-glucosamine 6-phosphate. Its function is as follows. Catalyzes the conversion of glucosamine-6-phosphate to glucosamine-1-phosphate. The sequence is that of Phosphoglucosamine mutase from Bradyrhizobium sp. (strain BTAi1 / ATCC BAA-1182).